A 193-amino-acid polypeptide reads, in one-letter code: Tetrahydromethanopterin S-methyltransferase subunit A 2 (193 aa).

At 1–38 (MADKKPTAENWPVVSGDYIVGDPESPVAVTTLASHNED) the chain is on the cytoplasmic side. The helical transmembrane segment at 39 to 58 (IPAAAGAAIAGPCKTENLGI) threads the bilayer. Residues 59 to 193 (EKVVANIISN…SESEKIESEA (135 aa)) are Extracellular-facing. A 5-hydroxybenzimidazolylcob(I)amide-binding site is contributed by histidine 84. Positions 174-193 (SKKSSFVESSSESEKIESEA) are disordered.

It belongs to the MtrA family. In terms of assembly, the complex is composed of 8 subunits; MtrA, MtrB, MtrC, MtrD, MtrE, MtrF, MtrG and MtrH. It depends on 5-hydroxybenzimidazolylcob(I)amide as a cofactor.

The protein resides in the cell membrane. The enzyme catalyses 5-methyl-5,6,7,8-tetrahydromethanopterin + coenzyme M + 2 Na(+)(in) = 5,6,7,8-tetrahydromethanopterin + methyl-coenzyme M + 2 Na(+)(out). The protein operates within one-carbon metabolism; methanogenesis from CO(2); methyl-coenzyme M from 5,10-methylene-5,6,7,8-tetrahydromethanopterin: step 2/2. In terms of biological role, part of a complex that catalyzes the formation of methyl-coenzyme M and tetrahydromethanopterin from coenzyme M and methyl-tetrahydromethanopterin. This is an energy-conserving, sodium-ion translocating step. The chain is Tetrahydromethanopterin S-methyltransferase subunit A 2 from Methanobrevibacter ruminantium (strain ATCC 35063 / DSM 1093 / JCM 13430 / OCM 146 / M1) (Methanobacterium ruminantium).